A 139-amino-acid chain; its full sequence is NADPH-dependent 7-cyano-7-deazaguanine reductase (139 aa).

Cysteine 34 (thioimide intermediate) is an active-site residue. Aspartate 41 functions as the Proton donor in the catalytic mechanism. Residues 56 to 58 (IEL) and 75 to 76 (HE) each bind substrate.

This sequence belongs to the GTP cyclohydrolase I family. QueF type 1 subfamily.

The protein resides in the cytoplasm. The enzyme catalyses 7-aminomethyl-7-carbaguanine + 2 NADP(+) = 7-cyano-7-deazaguanine + 2 NADPH + 3 H(+). It participates in tRNA modification; tRNA-queuosine biosynthesis. Catalyzes the NADPH-dependent reduction of 7-cyano-7-deazaguanine (preQ0) to 7-aminomethyl-7-deazaguanine (preQ1). In Nitrosomonas eutropha (strain DSM 101675 / C91 / Nm57), this protein is NADPH-dependent 7-cyano-7-deazaguanine reductase.